Reading from the N-terminus, the 145-residue chain is Granulysin (145 aa).

The N-terminal stretch at 1-22 (MATWALLLLAAMLLGNPGLVFS) is a signal peptide. In terms of domain architecture, Saposin B-type spans 62 to 142 (LGRDYRTCLT…EDLRLCIPST (81 aa)). 2 disulfides stabilise this stretch: Cys69–Cys132 and Cys96–Cys107.

In terms of processing, a 9 kDa form is produced by proteolytic processing of a 15 kDa protein. As to expression, expressed in natural killer and T-cells.

The protein localises to the secreted. Its function is as follows. Antimicrobial protein that kills intracellular pathogens. Active against a broad range of microbes, including Gram-positive and Gram-negative bacteria, fungi, and parasites. Kills Mycobacterium tuberculosis. The sequence is that of Granulysin (GNLY) from Homo sapiens (Human).